A 113-amino-acid polypeptide reads, in one-letter code: Integration host factor subunit alpha (113 aa).

Residues 59-80 (GNFQVRDKPPRPGRNPKTGETI) form a disordered region.

It belongs to the bacterial histone-like protein family. In terms of assembly, heterodimer of an alpha and a beta chain.

Its function is as follows. This protein is one of the two subunits of integration host factor, a specific DNA-binding protein that functions in genetic recombination as well as in transcriptional and translational control. This is Integration host factor subunit alpha from Bordetella bronchiseptica (strain ATCC BAA-588 / NCTC 13252 / RB50) (Alcaligenes bronchisepticus).